The following is a 156-amino-acid chain: Putative NrdI-like protein (156 aa).

This is Putative NrdI-like protein from Streptococcus pneumoniae (strain ATCC BAA-255 / R6).